The chain runs to 149 residues: Protein-export protein SecB 2 (149 aa).

This sequence belongs to the SecB family. In terms of assembly, homotetramer, a dimer of dimers. One homotetramer interacts with 1 SecA dimer.

It localises to the cytoplasm. Its function is as follows. One of the proteins required for the normal export of preproteins out of the cell cytoplasm. It is a molecular chaperone that binds to a subset of precursor proteins, maintaining them in a translocation-competent state. It also specifically binds to its receptor SecA. This Francisella tularensis subsp. tularensis (strain FSC 198) protein is Protein-export protein SecB 2.